The primary structure comprises 372 residues: Spermidine/putrescine import ATP-binding protein PotA (372 aa).

Residues 12–242 enclose the ABC transporter domain; that stretch reads IQLKGLNKSF…PTNLFVARFI (231 aa). 44 to 51 serves as a coordination point for ATP; it reads GPSGCGKT.

This sequence belongs to the ABC transporter superfamily. Spermidine/putrescine importer (TC 3.A.1.11.1) family. In terms of assembly, the complex is composed of two ATP-binding proteins (PotA), two transmembrane proteins (PotB and PotC) and a solute-binding protein (PotD).

It is found in the cell inner membrane. The enzyme catalyses ATP + H2O + polyamine-[polyamine-binding protein]Side 1 = ADP + phosphate + polyamineSide 2 + [polyamine-binding protein]Side 1.. Part of the ABC transporter complex PotABCD involved in spermidine/putrescine import. Responsible for energy coupling to the transport system. In Photobacterium profundum (strain SS9), this protein is Spermidine/putrescine import ATP-binding protein PotA.